The sequence spans 225 residues: NAD(P)H-quinone oxidoreductase subunit K, chloroplastic (225 aa).

Residues Cys-43, Cys-44, Cys-108, and Cys-139 each contribute to the [4Fe-4S] cluster site.

The protein belongs to the complex I 20 kDa subunit family. NDH is composed of at least 16 different subunits, 5 of which are encoded in the nucleus. It depends on [4Fe-4S] cluster as a cofactor.

It localises to the plastid. The protein localises to the chloroplast thylakoid membrane. It carries out the reaction a plastoquinone + NADH + (n+1) H(+)(in) = a plastoquinol + NAD(+) + n H(+)(out). It catalyses the reaction a plastoquinone + NADPH + (n+1) H(+)(in) = a plastoquinol + NADP(+) + n H(+)(out). NDH shuttles electrons from NAD(P)H:plastoquinone, via FMN and iron-sulfur (Fe-S) centers, to quinones in the photosynthetic chain and possibly in a chloroplast respiratory chain. The immediate electron acceptor for the enzyme in this species is believed to be plastoquinone. Couples the redox reaction to proton translocation, and thus conserves the redox energy in a proton gradient. The chain is NAD(P)H-quinone oxidoreductase subunit K, chloroplastic from Crucihimalaya wallichii (Rock-cress).